Reading from the N-terminus, the 121-residue chain is Protein yippee-like 5 (121 aa).

One can recognise a Yippee domain in the interval 13-110 (RLFSCANCDA…LERALVRESE (98 aa)). The Zn(2+) site is built by cysteine 17, cysteine 20, cysteine 73, and cysteine 76. Serine 118 is modified (phosphoserine).

It belongs to the yippee family. As to quaternary structure, identified in the CTLH complex that contains GID4, RANBP9 and/or RANBP10, MKLN1, MAEA, RMND5A (or alternatively its paralog RMND5B), GID8, ARMC8, WDR26 and YPEL5. Within this complex, MAEA, RMND5A (or alternatively its paralog RMND5B), GID8, WDR26, and RANBP9 and/or RANBP10 form the catalytic core, while GID4, MKLN1, ARMC8 and YPEL5 have ancillary roles. Interacts with RANBP9 and RANBP10.

The protein resides in the nucleus. Its subcellular location is the cytoplasm. It localises to the cytoskeleton. The protein localises to the microtubule organizing center. It is found in the centrosome. The protein resides in the spindle pole. Its subcellular location is the midbody. In terms of biological role, component of the CTLH E3 ubiquitin-protein ligase complex that selectively accepts ubiquitin from UBE2H and mediates ubiquitination and subsequent proteasomal degradation of the transcription factor HBP1. Required for normal cell proliferation. The chain is Protein yippee-like 5 (YPEL5) from Macaca fascicularis (Crab-eating macaque).